The sequence spans 298 residues: GTP cyclohydrolase FolE2 (298 aa).

The protein belongs to the GTP cyclohydrolase IV family.

It carries out the reaction GTP + H2O = 7,8-dihydroneopterin 3'-triphosphate + formate + H(+). Its pathway is cofactor biosynthesis; 7,8-dihydroneopterin triphosphate biosynthesis; 7,8-dihydroneopterin triphosphate from GTP: step 1/1. Converts GTP to 7,8-dihydroneopterin triphosphate. This is GTP cyclohydrolase FolE2 from Pseudomonas fluorescens (strain SBW25).